The following is a 381-amino-acid chain: L-lactate dehydrogenase (381 aa).

Residues methionine 1–lysine 380 form the FMN hydroxy acid dehydrogenase domain. Tyrosine 24 is a substrate binding site. The FMN site is built by serine 106 and glutamine 127. Position 129 (tyrosine 129) interacts with substrate. An FMN-binding site is contributed by threonine 155. Residue arginine 164 coordinates substrate. Position 251 (lysine 251) interacts with FMN. Histidine 275 functions as the Proton acceptor in the catalytic mechanism. Arginine 278 provides a ligand contact to substrate. FMN is bound at residue aspartate 306 to arginine 330.

It belongs to the FMN-dependent alpha-hydroxy acid dehydrogenase family. The cofactor is FMN.

The protein resides in the cell inner membrane. It carries out the reaction (S)-lactate + A = pyruvate + AH2. Catalyzes the conversion of L-lactate to pyruvate. Is coupled to the respiratory chain. This is L-lactate dehydrogenase from Haemophilus influenzae (strain 86-028NP).